Reading from the N-terminus, the 217-residue chain is T-complex protein 10A homolog 1 (217 aa).

Positions 1 to 26 are disordered; the sequence is MLAGQLEARDPKEGTHPEDPCPGAGA. The span at 7–19 shows a compositional bias: basic and acidic residues; sequence EARDPKEGTHPED. Residues 69–110 adopt a coiled-coil conformation; that stretch reads ADVHGKLRSHIDALREQNMELREKLRALQLQRWKARKKSAAS. The segment at 75 to 96 is leucine-zipper; that stretch reads LRSHIDALREQNMELREKLRAL. The segment covering 175 to 192 has biased composition (basic and acidic residues); the sequence is ERISSWKTPPQEKRDKSL. The segment at 175–217 is disordered; the sequence is ERISSWKTPPQEKRDKSLSRRRQDRRATPTGRPTPCAERRGGV.

Belongs to the TCP10 family. As to quaternary structure, self-associates (via leucine zipper). Interacts (via leucine zipper) with ZIPK/DAPK3 (via leucine zipper). Interacts with MAD4.

Its subcellular location is the nucleus. In terms of biological role, may be involved in transcriptional regulation. Has in vitro transcription inhibition activity. In Pan troglodytes (Chimpanzee), this protein is T-complex protein 10A homolog 1 (TCP10L).